Reading from the N-terminus, the 278-residue chain is Aliphatic sulfonates import ATP-binding protein SsuB (278 aa).

Residues 15-236 enclose the ABC transporter domain; the sequence is LVLRDLSKRF…SQGDAAFAAL (222 aa). 47–54 is a binding site for ATP; the sequence is GRSGCGKS. Residues 251–264 are compositionally biased toward basic and acidic residues; the sequence is PERESFTHPNDGEP. The interval 251–278 is disordered; that stretch reads PERESFTHPNDGEPRWPGVPAHGVRWAV.

It belongs to the ABC transporter superfamily. Aliphatic sulfonates importer (TC 3.A.1.17.2) family. The complex is composed of two ATP-binding proteins (SsuB), two transmembrane proteins (SsuC) and a solute-binding protein (SsuA).

The protein localises to the cell inner membrane. It carries out the reaction ATP + H2O + aliphatic sulfonate-[sulfonate-binding protein]Side 1 = ADP + phosphate + aliphatic sulfonateSide 2 + [sulfonate-binding protein]Side 1.. In terms of biological role, part of the ABC transporter complex SsuABC involved in aliphatic sulfonates import. Responsible for energy coupling to the transport system. The protein is Aliphatic sulfonates import ATP-binding protein SsuB of Albidiferax ferrireducens (strain ATCC BAA-621 / DSM 15236 / T118) (Rhodoferax ferrireducens).